The chain runs to 105 residues: UPF0145 protein HD_1349 (105 aa).

Belongs to the UPF0145 family.

This Haemophilus ducreyi (strain 35000HP / ATCC 700724) protein is UPF0145 protein HD_1349.